The sequence spans 426 residues: Chromatin structure-remodeling complex subunit SFH1 (426 aa).

S78 bears the Phosphoserine mark. Residues 201 to 242 (AIMIPITLDIEHMGHTIKDQFLWNYNDDSISPEEFASIYCKD) form an interaction with STH1 region.

It belongs to the SNF5 family. In terms of assembly, interacts directly with STH1. Component of the two forms of the RSC complex composed of at least either RSC1 or RSC2, and ARP7, ARP9, LDB7, NPL6, RSC3, RSC30, RSC4, RSC58, RSC6, RSC8, RSC9, SFH1, STH1, HTL1 and probably RTT102. The complexes interact with histone and histone variant components of centromeric chromatin. Post-translationally, phosphorylated in the G1 phase.

It localises to the nucleus. Component of the chromatin structure-remodeling complex (RSC), which is involved in transcription regulation and nucleosome positioning. RSC is responsible for the transfer of a histone octamer from a nucleosome core particle to naked DNA. The reaction requires ATP and involves an activated RSC-nucleosome intermediate. Remodeling reaction also involves DNA translocation, DNA twist and conformational change. As a reconfigurer of centromeric and flanking nucleosomes, RSC complex is required both for proper kinetochore function in chromosome segregation and, via a PKC1-dependent signaling pathway, for organization of the cellular cytoskeleton. This subunit is essential for mitotic growth and required for cell cycle progression. The polypeptide is Chromatin structure-remodeling complex subunit SFH1 (SFH1) (Saccharomyces cerevisiae (strain ATCC 204508 / S288c) (Baker's yeast)).